Reading from the N-terminus, the 653-residue chain is Fructose-1,6-bisphosphatase class 3 2 (653 aa).

It belongs to the FBPase class 3 family. Mn(2+) serves as cofactor.

It carries out the reaction beta-D-fructose 1,6-bisphosphate + H2O = beta-D-fructose 6-phosphate + phosphate. Its pathway is carbohydrate biosynthesis; gluconeogenesis. The sequence is that of Fructose-1,6-bisphosphatase class 3 2 from Clostridium beijerinckii (strain ATCC 51743 / NCIMB 8052) (Clostridium acetobutylicum).